The primary structure comprises 362 residues: Terpene synthase 3 (362 aa).

Positions D90–R95 match the DDxx(x)D/E motif motif. The NDxxSxxxD/E motif signature appears at N239–E247.

Belongs to the terpene synthase family.

It carries out the reaction (2E,6E)-farnesyl diphosphate = beta-maaliene + diphosphate. It catalyses the reaction (2E,6E)-farnesyl diphosphate = aristolene + diphosphate. The enzyme catalyses (2E,6E)-farnesyl diphosphate = calarene + diphosphate. The catalysed reaction is (2E)-geranyl diphosphate = (E)-beta-ocimene + diphosphate. It carries out the reaction (2E)-geranyl diphosphate = (Z)-beta-ocimene + diphosphate. It catalyses the reaction (2E)-geranyl diphosphate + H2O = linalool + diphosphate. The enzyme catalyses (2E)-geranyl diphosphate = beta-myrcene + diphosphate. Its function is as follows. Terpene synthase that converts its substrate farnesyl diphosphate (FPP) into an unidentified sesquiterpene as a major product, as well as beta-maaliene, aristolene, calarene and 2 additional unidentified sesquiterpene as minor products. Is also able to convert geranyl diphosphate (GPP) into a mixture of monoterpenes including (Z)-beta-ocimene, (E)-beta-ocimene, allo-ocimene, linalool and beta-myrcene. The chain is Terpene synthase 3 from Dictyostelium discoideum (Social amoeba).